Consider the following 313-residue polypeptide: MKKEQDSNVTEFVLLGLSSSWELQLFLFLLFLFFYIAIVLGNLLIVVTVQAHAHLLQSPMYYFLGHLSFIDLCLSCVTVPKMLGDFLQQGKSISFSGCLAQIYFLHFLGASEMFLLTVMAYDRYVAICNPLRYLTVMNPQLCLWLVLACWCGGFIHSIMQVILVIQLPFCGPNELDNFYCDVPQVIKLACMDTYVVEVLVIANSGLLSLVCFLVLLFSYAIILITLRTHFCQGQNKVFSTCASHLTVVSLIFVPCVFIYLRPFCSFSVDKIFSLFYTVITPMLNPLIYTLRNTDMKTAMKKLRIKPCGIPLPC.

Over M1 to L25 the chain is Extracellular. N-linked (GlcNAc...) asparagine glycosylation occurs at N8. Residues F26 to V49 form a helical membrane-spanning segment. Residues Q50 to S58 lie on the Cytoplasmic side of the membrane. Residues P59 to P80 form a helical membrane-spanning segment. Topologically, residues K81 to Q101 are extracellular. C98 and C190 are oxidised to a cystine. Residues I102 to Y121 form a helical membrane-spanning segment. The Cytoplasmic segment spans residues D122–Q140. Residues L141–M159 traverse the membrane as a helical segment. At Q160–V196 the chain is on the extracellular side. Residues E197–A220 traverse the membrane as a helical segment. Topologically, residues I221 to K236 are cytoplasmic. A helical membrane pass occupies residues V237 to Y259. Residues L260 to K270 are Extracellular-facing. A helical membrane pass occupies residues I271 to L290. Topologically, residues R291–C313 are cytoplasmic.

This sequence belongs to the G-protein coupled receptor 1 family.

It is found in the cell membrane. Its function is as follows. Odorant receptor. The sequence is that of Olfactory receptor 4Q3 (OR4Q3) from Homo sapiens (Human).